The primary structure comprises 446 residues: Probable cytosolic iron-sulfur protein assembly protein 1 (446 aa).

7 WD repeats span residues 17 to 59 (AFKP…AHSN), 63 to 106 (GHTR…PLEE), 143 to 182 (GHEN…EGDD), 192 to 241 (EHDG…EWAC), 247 to 291 (GHSS…PEAS), 330 to 368 (VHTR…NPST), and 398 to 446 (GHGP…SIEL). A compositionally biased stretch (basic and acidic residues) spans 106 to 128 (EGTKKGESTEIDVTRRRNNNDSD). The interval 106–133 (EGTKKGESTEIDVTRRRNNNDSDKDNDD) is disordered.

This sequence belongs to the WD repeat CIA1 family.

Its function is as follows. Essential component of the cytosolic iron-sulfur (Fe/S) protein assembly machinery. Required for the maturation of extramitochondrial Fe/S proteins. The protein is Probable cytosolic iron-sulfur protein assembly protein 1 of Pyricularia oryzae (strain 70-15 / ATCC MYA-4617 / FGSC 8958) (Rice blast fungus).